We begin with the raw amino-acid sequence, 225 residues long: UPF0758 protein Sez_1052 (225 aa).

The MPN domain maps to 102-224 (PVLSSAQVAE…YYSFREKSDL (123 aa)). Residues His-173, His-175, and Asp-186 each coordinate Zn(2+). The short motif at 173–186 (HNHPSGLTKPSAND) is the JAMM motif element.

This sequence belongs to the UPF0758 family.

In Streptococcus equi subsp. zooepidemicus (strain MGCS10565), this protein is UPF0758 protein Sez_1052.